The following is a 113-amino-acid chain: Iron-sulfur cluster insertion protein ErpA (113 aa).

Residues Cys41, Cys105, and Cys107 each contribute to the iron-sulfur cluster site.

The protein belongs to the HesB/IscA family. As to quaternary structure, homodimer. Requires iron-sulfur cluster as cofactor.

Its function is as follows. Required for insertion of 4Fe-4S clusters for at least IspG. In Photobacterium profundum (strain SS9), this protein is Iron-sulfur cluster insertion protein ErpA.